We begin with the raw amino-acid sequence, 257 residues long: Acetylglutamate kinase (257 aa).

Substrate contacts are provided by residues 43-44 (GG), Arg65, and Asn157.

This sequence belongs to the acetylglutamate kinase family. ArgB subfamily.

Its subcellular location is the cytoplasm. It carries out the reaction N-acetyl-L-glutamate + ATP = N-acetyl-L-glutamyl 5-phosphate + ADP. It functions in the pathway amino-acid biosynthesis; L-arginine biosynthesis; N(2)-acetyl-L-ornithine from L-glutamate: step 2/4. Catalyzes the ATP-dependent phosphorylation of N-acetyl-L-glutamate. The polypeptide is Acetylglutamate kinase (Actinobacillus succinogenes (strain ATCC 55618 / DSM 22257 / CCUG 43843 / 130Z)).